We begin with the raw amino-acid sequence, 470 residues long: Argininosuccinate lyase (470 aa).

This sequence belongs to the lyase 1 family. Argininosuccinate lyase subfamily.

The protein resides in the cytoplasm. The catalysed reaction is 2-(N(omega)-L-arginino)succinate = fumarate + L-arginine. Its pathway is amino-acid biosynthesis; L-arginine biosynthesis; L-arginine from L-ornithine and carbamoyl phosphate: step 3/3. In Mycobacterium sp. (strain JLS), this protein is Argininosuccinate lyase.